Consider the following 106-residue polypeptide: Cytochrome c3 (106 aa).

The heme c site is built by H26, H29, C34, C37, H38, H39, C50, C55, H56, H75, C82, C85, H86, C98, C101, and H102.

Post-translationally, binds 4 heme c groups per subunit.

Participates in sulfate respiration coupled with phosphorylation by transferring electrons from the enzyme dehydrogenase to ferredoxin. This is Cytochrome c3 from Maridesulfovibrio salexigens (Desulfovibrio salexigens).